The chain runs to 237 residues: uncharacterized protein (237 aa).

A run of 7 helical transmembrane segments spans residues 19–39, 51–71, 81–101, 106–126, 136–156, 159–179, and 209–229; these read ILNG…GLAW, YDSP…YGLS, IAGV…ASLV, IIIV…AGLL, FIIM…AALM, RPIW…ISHG, and LYYY…TLVW.

It localises to the cell membrane. This is an uncharacterized protein from Escherichia coli (strain K12).